The sequence spans 451 residues: Chromosomal replication initiator protein DnaA (451 aa).

Positions 1-72 are domain I, interacts with DnaA modulators; it reads MQSIEDIWQE…ANILQEITGR (72 aa). Residues 72 to 108 form a domain II region; it reads RLFDVRFIDGEQEENFEYTVIKPNPALDEDGIEIGKH. The segment at 109–325 is domain III, AAA+ region; the sequence is MLNPRYVFDT…GALIRVVAYS (217 aa). ATP-binding residues include G153, G155, K156, and T157. A domain IV, binds dsDNA region spans residues 326 to 451; sequence SLVNKDITAG…KNLRKSQNMF (126 aa).

This sequence belongs to the DnaA family. In terms of assembly, oligomerizes as a right-handed, spiral filament on DNA at oriC.

The protein localises to the cytoplasm. Its function is as follows. Plays an essential role in the initiation and regulation of chromosomal replication. ATP-DnaA binds to the origin of replication (oriC) to initiate formation of the DNA replication initiation complex once per cell cycle. Binds the DnaA box (a 9 base pair repeat at the origin) and separates the double-stranded (ds)DNA. Forms a right-handed helical filament on oriC DNA; dsDNA binds to the exterior of the filament while single-stranded (ss)DNA is stabiized in the filament's interior. The ATP-DnaA-oriC complex binds and stabilizes one strand of the AT-rich DNA unwinding element (DUE), permitting loading of DNA polymerase. After initiation quickly degrades to an ADP-DnaA complex that is not apt for DNA replication. Binds acidic phospholipids. In Listeria welshimeri serovar 6b (strain ATCC 35897 / DSM 20650 / CCUG 15529 / CIP 8149 / NCTC 11857 / SLCC 5334 / V8), this protein is Chromosomal replication initiator protein DnaA.